We begin with the raw amino-acid sequence, 126 residues long: MSALTSQLEEFRRCSTAEQYFDLLDVDYDPRVVAVNRLHILRFFAEEIAGLHDGADAEVSPEVLLRDYRAALIRAYEAFTTATALDHRLFKVLKDRAPEPAGFVPMSEITVERPATTQTDEKGQQR.

The disordered stretch occupies residues valine 104–arginine 126.

The protein belongs to the NifW family. As to quaternary structure, homotrimer; associates with NifD.

Its function is as follows. May protect the nitrogenase Fe-Mo protein from oxidative damage. This chain is Nitrogenase-stabilizing/protective protein NifW, found in Parafrankia sp. (strain EAN1pec).